Reading from the N-terminus, the 132-residue chain is Small ribosomal subunit protein uS8 (132 aa).

Belongs to the universal ribosomal protein uS8 family. In terms of assembly, part of the 30S ribosomal subunit. Contacts proteins S5 and S12.

Functionally, one of the primary rRNA binding proteins, it binds directly to 16S rRNA central domain where it helps coordinate assembly of the platform of the 30S subunit. This is Small ribosomal subunit protein uS8 from Rhizobium meliloti (strain 1021) (Ensifer meliloti).